A 380-amino-acid chain; its full sequence is Putative 8-amino-7-oxononanoate synthase (380 aa).

Substrate is bound at residue Arg-18. Gly-106–Tyr-107 lines the pyridoxal 5'-phosphate pocket. Residue His-131 coordinates substrate. Pyridoxal 5'-phosphate contacts are provided by residues Ser-179, Asp-205–His-208, and Thr-236–Lys-239. Lys-239 carries the post-translational modification N6-(pyridoxal phosphate)lysine. Thr-352 contributes to the substrate binding site.

It belongs to the class-II pyridoxal-phosphate-dependent aminotransferase family. BioF subfamily. Homodimer. Pyridoxal 5'-phosphate serves as cofactor.

It catalyses the reaction 6-carboxyhexanoyl-[ACP] + L-alanine + H(+) = (8S)-8-amino-7-oxononanoate + holo-[ACP] + CO2. Its pathway is cofactor biosynthesis; biotin biosynthesis. In terms of biological role, catalyzes the decarboxylative condensation of pimeloyl-[acyl-carrier protein] and L-alanine to produce 8-amino-7-oxononanoate (AON), [acyl-carrier protein], and carbon dioxide. The protein is Putative 8-amino-7-oxononanoate synthase (bioF) of Neisseria meningitidis serogroup C / serotype 2a (strain ATCC 700532 / DSM 15464 / FAM18).